A 1909-amino-acid polypeptide reads, in one-letter code: Receptor-type tyrosine-protein phosphatase F (1909 aa).

A signal peptide spans 1–31; sequence MVPNTCTSVPLLPVGLPLLLLLSCIQFSSQA. The Extracellular segment spans residues 32–1266; it reads DSLPNFVRSP…RSVDQPEMLW (1235 aa). Ig-like C2-type domains lie at 35–125, 137–225, and 233–315; these read PNFV…AKLT, PTID…ANLY, and PRFS…AQVS. A disulfide bridge links Cys-56 with Cys-109. 68–77 contributes to the heparin binding site; sequence WMKKGKKVSS. An N-linked (GlcNAc...) asparagine glycan is attached at Asn-119. Cys-158 and Cys-208 are oxidised to a cystine. Residues Asn-251 and Asn-296 are each glycosylated (N-linked (GlcNAc...) asparagine). A disulfide bridge links Cys-254 with Cys-299. Fibronectin type-III domains are found at residues 322-412, 417-511, 515-604, 609-706, 711-819, 820-914, 918-1013, and 1014-1098; these read PPTS…TGEQ, PPLH…TQQG, QPSS…TAQS, PPQD…TNED, PPRK…TTGA, VPGK…PEDV, FPLN…TSPA, and FATS…TAPD. Residues 399–418 form a disordered region; the sequence is GPPSEPVETRTGEQAPSSPP. The N-linked (GlcNAc...) asparagine glycan is linked to Asn-721. N-linked (GlcNAc...) asparagine glycans are attached at residues Asn-963 and Asn-966. A helical membrane pass occupies residues 1267–1287; the sequence is VMGPVLAVVLIIIIVIAILLF. At 1288 to 1909 the chain is on the cytoplasmic side; that stretch reads KRKRASPLPK…YLGSFDHYAT (622 aa). Tyrosine-protein phosphatase domains are found at residues 1354 to 1609 and 1641 to 1900; these read FSQE…LLEA and MELE…ALEY. Residues Asp-1518, 1550–1556, and Gln-1594 each bind substrate; that span reads CSAGVGR. The active-site Phosphocysteine intermediate is the Cys-1550. Cys-1841 serves as the catalytic Phosphocysteine intermediate.

Belongs to the protein-tyrosine phosphatase family. Receptor class 2A subfamily.

It is found in the membrane. The enzyme catalyses O-phospho-L-tyrosyl-[protein] + H2O = L-tyrosyl-[protein] + phosphate. Functionally, possible cell adhesion receptor. It possesses an intrinsic protein tyrosine phosphatase activity (PTPase). Its function is as follows. The first PTPase domain has enzymatic activity, while the second one seems to affect the substrate specificity of the first one. This chain is Receptor-type tyrosine-protein phosphatase F (ptprf), found in Danio rerio (Zebrafish).